A 209-amino-acid polypeptide reads, in one-letter code: Thymidylate kinase (209 aa).

Residue 13–20 (GLEGAGKS) participates in ATP binding.

Belongs to the thymidylate kinase family.

The enzyme catalyses dTMP + ATP = dTDP + ADP. Functionally, phosphorylation of dTMP to form dTDP in both de novo and salvage pathways of dTTP synthesis. In Shewanella sp. (strain ANA-3), this protein is Thymidylate kinase.